The sequence spans 423 residues: Glutamate-1-semialdehyde 2,1-aminomutase (423 aa).

K259 is subject to N6-(pyridoxal phosphate)lysine.

This sequence belongs to the class-III pyridoxal-phosphate-dependent aminotransferase family. HemL subfamily. Homodimer. It depends on pyridoxal 5'-phosphate as a cofactor.

The protein resides in the cytoplasm. It carries out the reaction (S)-4-amino-5-oxopentanoate = 5-aminolevulinate. Its pathway is porphyrin-containing compound metabolism; protoporphyrin-IX biosynthesis; 5-aminolevulinate from L-glutamyl-tRNA(Glu): step 2/2. In Thermosipho melanesiensis (strain DSM 12029 / CIP 104789 / BI429), this protein is Glutamate-1-semialdehyde 2,1-aminomutase.